Consider the following 64-residue polypeptide: Conotoxin Im11.1 (64 aa).

The N-terminal stretch at 1-26 (MMFRLTSVSCFLLVIACLNLVVLTNA) is a signal peptide. 4 cysteine pairs are disulfide-bonded: C27/C41, C34/C46, C40/C50, and C45/C54. At N57 the chain carries Asparagine amide. A propeptide spanning residues 61-64 (ATFQ) is cleaved from the precursor.

It belongs to the conotoxin I2 superfamily. In terms of tissue distribution, expressed by the venom duct.

It localises to the secreted. The chain is Conotoxin Im11.1 from Conus imperialis (Imperial cone).